The following is a 325-amino-acid chain: Melanocortin receptor 5 (325 aa).

The Extracellular portion of the chain corresponds to Met1–Gly37. N-linked (GlcNAc...) asparagine glycans are attached at residues Asn2, Asn11, Asn15, and Asn28. A helical membrane pass occupies residues Ile38–Ile61. Residues Val62–Phe73 lie on the Cytoplasmic side of the membrane. A helical membrane pass occupies residues Phe74 to Tyr97. Over Leu98 to Ile114 the chain is Extracellular. Residues Asp115 to Val138 form a helical membrane-spanning segment. Over Asp139–Thr155 the chain is Cytoplasmic. A helical membrane pass occupies residues Ala156–Ile179. Residues Tyr180–Val186 lie on the Extracellular side of the membrane. Residues Ile187–Leu211 traverse the membrane as a helical segment. Topologically, residues Ala212–Thr239 are cytoplasmic. A helical transmembrane segment spans residues Leu240–Pro265. The Extracellular segment spans residues Gln266–Phe273. A helical membrane pass occupies residues Met274–Leu297. Over Arg298 to Tyr325 the chain is Cytoplasmic. Residues Cys311 and Cys312 are each lipidated (S-palmitoyl cysteine).

This sequence belongs to the G-protein coupled receptor 1 family. In terms of tissue distribution, skin, adrenal gland, skeletal muscle, bone marrow, spleen, thymus, gonads, uterus and brain.

The protein localises to the cell membrane. Receptor for MSH (alpha, beta and gamma) and ACTH. The activity of this receptor is mediated by G proteins which activate adenylate cyclase. This receptor is a possible mediator of the immunomodulation properties of melanocortins. The chain is Melanocortin receptor 5 (Mc5r) from Mus musculus (Mouse).